Consider the following 389-residue polypeptide: N-terminal EF-hand calcium-binding protein 2 (389 aa).

At R10 the chain carries Omega-N-methylarginine. Position 42 is an asymmetric dimethylarginine (R42). 2 EF-hand domains span residues 63–98 (GGTA…GVLN) and 99–132 (EKEL…HMGD). Residues D76, N78, D80, K82, E87, D110, D112, T114, H116, and E121 each coordinate Ca(2+). Positions 173-198 (LKETANQIQSLLSSVESAVEAIEEQT) form a coiled coil. The ABM domain maps to 289-377 (QLVRQEMAVC…LSQPEALSQI (89 aa)).

As to quaternary structure, interacts (calcium-dependent) with ADORA2A and GRM5. As to expression, expressed in the iris, in the ciliary margin of the retina and in the inner portion of the neural retina. Expressed in the spinal dorsal horn with especially strong expression in lamina IIi; found in excitory synaptic boutons (at protein level).

The protein resides in the cytoplasm. Its subcellular location is the cell projection. The protein localises to the dendrite. It is found in the axon. It localises to the cell membrane. May act as a signaling scaffold protein that senses intracellular calcium. Can modulate ligand-induced internalization of ADORA2A and coupling efficiency of mGluR5/GRM5; for both receptors may regulate signaling activity such as promoting MAPK1/3 (ERK1/2) activation. This Mus musculus (Mouse) protein is N-terminal EF-hand calcium-binding protein 2 (Necab2).